The sequence spans 353 residues: Rhodopsin (353 aa).

Over 1 to 36 (MNGTEGPFFYVPMVNTTGIVRSPYEYPQYYLVNPAA) the chain is Extracellular. Asn-2 and Asn-15 each carry an N-linked (GlcNAc...) asparagine glycan. Residues 37–61 (YAALGAYMFLLILVGFPINFLTLYV) form a helical membrane-spanning segment. At 62–73 (TIEHKKLRTPLN) the chain is on the cytoplasmic side. A helical membrane pass occupies residues 74 to 96 (YILLNLAVADLFMVLGGFTTTMY). Residues 97-110 (TSMHGYFVLGRLGC) lie on the Extracellular side of the membrane. A disulfide bridge links Cys-110 with Cys-187. A helical transmembrane segment spans residues 111–133 (NIEGFFATLGGEIALWSLVVLAI). The 'Ionic lock' involved in activated form stabilization motif lies at 134–136 (ERW). Over 134 to 152 (ERWVVVCKPISNFRFGENH) the chain is Cytoplasmic. A helical membrane pass occupies residues 153–173 (AIMGLAFTWTMAMACAAPPLV). Residues 174–202 (GWSRYIPEGMQCSCGIDYYTRAEGFNNES) are Extracellular-facing. The N-linked (GlcNAc...) asparagine glycan is linked to Asn-200. The chain crosses the membrane as a helical span at residues 203–224 (FVIYMFICHFTIPLTVVFFCYG). Residues 225–252 (RLLCAVKEAAAAQQESETTQRAEKEVTR) lie on the Cytoplasmic side of the membrane. A helical transmembrane segment spans residues 253 to 274 (MVIMMVIAFLVCWLPYASVAWY). The Extracellular portion of the chain corresponds to 275 to 286 (IFTHQGSEFGPV). The helical transmembrane segment at 287–308 (FMTIPAFFAKSSSIYNPMIYIC) threads the bilayer. Lys-296 carries the post-translational modification N6-(retinylidene)lysine. The Cytoplasmic portion of the chain corresponds to 309–353 (LNKQFRHCMITTLCCGKNPFEEEEGASTASKTEASSVSSSSVSPA). 2 S-palmitoyl cysteine lipidation sites follow: Cys-322 and Cys-323. The tract at residues 331 to 353 (EEGASTASKTEASSVSSSSVSPA) is disordered. Low complexity predominate over residues 334–353 (ASTASKTEASSVSSSSVSPA).

This sequence belongs to the G-protein coupled receptor 1 family. Opsin subfamily. Post-translationally, phosphorylated on some or all of the serine and threonine residues present in the C-terminal region. Contains one covalently linked retinal chromophore.

The protein resides in the membrane. The protein localises to the cell projection. It is found in the cilium. Its subcellular location is the photoreceptor outer segment. Functionally, photoreceptor required for image-forming vision at low light intensity. While most salt water fish species use retinal as chromophore, most freshwater fish use 3-dehydroretinal, or a mixture of retinal and 3-dehydroretinal. Light-induced isomerization of 11-cis to all-trans retinal triggers a conformational change that activates signaling via G-proteins. Subsequent receptor phosphorylation mediates displacement of the bound G-protein alpha subunit by arrestin and terminates signaling. This is Rhodopsin (rho) from Diplodus annularis (Annular seabream).